Consider the following 440-residue polypeptide: Ribosomal protein uS12 methylthiotransferase RimO (440 aa).

Residues 6–116 enclose the MTTase N-terminal domain; that stretch reads PKVGFVSLGC…VVSAVHEVVP (111 aa). 6 residues coordinate [4Fe-4S] cluster: Cys15, Cys51, Cys80, Cys149, Cys153, and Cys156. A Radical SAM core domain is found at 135–374; that stretch reads LTPRHYAYLK…AHQQAISSAR (240 aa). Residues 376–440 form the TRAM domain; the sequence is QAKIGLEMDV…DEYDMWGELV (65 aa).

It belongs to the methylthiotransferase family. RimO subfamily. [4Fe-4S] cluster is required as a cofactor.

It is found in the cytoplasm. The enzyme catalyses L-aspartate(89)-[ribosomal protein uS12]-hydrogen + (sulfur carrier)-SH + AH2 + 2 S-adenosyl-L-methionine = 3-methylsulfanyl-L-aspartate(89)-[ribosomal protein uS12]-hydrogen + (sulfur carrier)-H + 5'-deoxyadenosine + L-methionine + A + S-adenosyl-L-homocysteine + 2 H(+). Functionally, catalyzes the methylthiolation of an aspartic acid residue of ribosomal protein uS12. The protein is Ribosomal protein uS12 methylthiotransferase RimO of Ectopseudomonas mendocina (strain ymp) (Pseudomonas mendocina).